The following is a 258-amino-acid chain: UPF0246 protein ACIAD2218 (258 aa).

The protein belongs to the UPF0246 family.

This chain is UPF0246 protein ACIAD2218, found in Acinetobacter baylyi (strain ATCC 33305 / BD413 / ADP1).